The chain runs to 354 residues: Ornithine transcarbamylase, mitochondrial (354 aa).

A mitochondrion-targeting transit peptide spans 1–32 (MLSNLRILLNKAALRKAHTSMVRNFRYGKPVQ). Residue Lys70 is modified to N6-acetyllysine; alternate. Lys70 carries the post-translational modification N6-succinyllysine; alternate. Lys80 carries the post-translational modification N6-succinyllysine. Lys88 carries the post-translational modification N6-acetyllysine; alternate. At Lys88 the chain carries N6-succinyllysine; alternate. 90–93 (STRT) contributes to the carbamoyl phosphate binding site. The residue at position 133 (Ser133) is a Phosphoserine. Arg141 provides a ligand contact to carbamoyl phosphate. Lys144 bears the N6-acetyllysine; alternate mark. An N6-succinyllysine; alternate modification is found at Lys144. 2 residues coordinate carbamoyl phosphate: His168 and Gln171. Asn199 contacts L-ornithine. Residues Lys221, Lys231, and Lys238 each carry the N6-acetyllysine; alternate modification. Lys221, Lys231, and Lys238 each carry N6-succinyllysine; alternate. The L-ornithine site is built by Asp263, Ser267, and Met268. An N6-succinyllysine mark is found at Lys274 and Lys289. N6-acetyllysine; alternate is present on Lys292. The residue at position 292 (Lys292) is an N6-succinyllysine; alternate. The Proton acceptor role is filled by Cys303. 303–304 (CL) is a carbamoyl phosphate binding site. Residue Lys307 is modified to N6-acetyllysine; alternate. An N6-succinyllysine; alternate modification is found at Lys307. Arg330 is a carbamoyl phosphate binding site.

It belongs to the aspartate/ornithine carbamoyltransferase superfamily. OTCase family. Homotrimer. Post-translationally, acetylation at Lys-88 negatively regulates ornithine carbamoyltransferase activity in response to nutrient signals.

It localises to the mitochondrion matrix. It catalyses the reaction carbamoyl phosphate + L-ornithine = L-citrulline + phosphate + H(+). It participates in nitrogen metabolism; urea cycle; L-citrulline from L-ornithine and carbamoyl phosphate: step 1/1. Negatively regulated by lysine acetylation. Catalyzes the second step of the urea cycle, the condensation of carbamoyl phosphate with L-ornithine to form L-citrulline. The urea cycle ensures the detoxification of ammonia by converting it to urea for excretion. This is Ornithine transcarbamylase, mitochondrial from Rattus norvegicus (Rat).